Here is a 91-residue protein sequence, read N- to C-terminus: Probable Fe(2+)-trafficking protein (91 aa).

It belongs to the Fe(2+)-trafficking protein family.

Could be a mediator in iron transactions between iron acquisition and iron-requiring processes, such as synthesis and/or repair of Fe-S clusters in biosynthetic enzymes. The protein is Probable Fe(2+)-trafficking protein of Acidobacterium capsulatum (strain ATCC 51196 / DSM 11244 / BCRC 80197 / JCM 7670 / NBRC 15755 / NCIMB 13165 / 161).